A 470-amino-acid chain; its full sequence is Origin of replication complex subunit 4 (470 aa).

63–70 (GPRGCGKA) lines the ATP pocket.

It belongs to the ORC4 family. In terms of assembly, component of the origin recognition complex (ORC) composed of at least ORC1, ORC2, ORC3, ORC4, ORC5 and ORC6. ORC is regulated in a cell-cycle and development dependent manner. It is sequentially assembled at the exit from anaphase of mitosis and disassembled as cells enter S phase. Expressed in the shoot apical meristem (SAM), leaves, ears and roots (including root tips).

Its subcellular location is the nucleus. In terms of biological role, component of the origin recognition complex (ORC) that binds origins of replication. DNA-binding is ATP-dependent. The specific DNA sequences that define origins of replication have not been identified yet. ORC is required to assemble the pre-replication complex necessary to initiate DNA replication. In Oryza sativa subsp. japonica (Rice), this protein is Origin of replication complex subunit 4.